A 1029-amino-acid chain; its full sequence is Multidrug resistance protein MdtC (1029 aa).

Transmembrane regions (helical) follow at residues 15-35 (ILLS…LPVA), 333-353 (EVEQ…FLFL), 360-380 (LIPA…MYLC), 387-407 (LSLM…IVAL), 431-451 (VGFT…PLLL), 469-489 (VAIG…CGWL), 528-548 (LVGL…ISIP), 853-873 (VILI…LYES), 897-917 (AFDA…IGIV), 953-973 (PIMM…IASG), and 984-1004 (ITIV…TPVV).

The protein belongs to the resistance-nodulation-cell division (RND) (TC 2.A.6) family. MdtC subfamily. As to quaternary structure, part of a tripartite efflux system composed of MdtA, MdtB and MdtC. MdtC forms a heteromultimer with MdtB.

The protein localises to the cell inner membrane. The protein is Multidrug resistance protein MdtC of Cronobacter sakazakii (strain ATCC BAA-894) (Enterobacter sakazakii).